A 615-amino-acid polypeptide reads, in one-letter code: Granule-bound starch synthase 1, chloroplastic/amyloplastic (615 aa).

The N-terminal 70 residues, 1–70 (MAALVTSQLA…DRRCLSMVVR (70 aa)), are a transit peptide targeting the chloroplast. Lysine 91 serves as a coordination point for ADP-alpha-D-glucose.

Belongs to the glycosyltransferase 1 family. Bacterial/plant glycogen synthase subfamily. Found in seeds and pollen.

Its subcellular location is the plastid. It localises to the chloroplast. It is found in the amyloplast. It carries out the reaction an NDP-alpha-D-glucose + [(1-&gt;4)-alpha-D-glucosyl](n) = [(1-&gt;4)-alpha-D-glucosyl](n+1) + a ribonucleoside 5'-diphosphate + H(+). Its pathway is glycan biosynthesis; starch biosynthesis. The protein is Granule-bound starch synthase 1, chloroplastic/amyloplastic (WAXY) of Triticum aestivum (Wheat).